The following is a 357-amino-acid chain: Neurogenic differentiation factor 1 (357 aa).

A disordered region spans residues 1-94; the sequence is MTKSYSESGL…GPKKKKMTKA (94 aa). A compositionally biased stretch (acidic residues) spans 58-78; sequence EEEDEDEDLEEEEEEEEEEDD. A compositionally biased stretch (basic residues) spans 81-93; it reads PKRRGPKKKKMTK. A Nuclear localization signal motif is present at residues 87 to 93; it reads KKKKMTK. The region spanning 101–153 is the bHLH domain; it reads LRRMKANARERNRMHGLNAALDNLRKVVPCYSKTQKLSKIETLRLAKNYIWAL. Phosphoserine is present on residues serine 162, serine 259, serine 266, and serine 274. The residue at position 336 (serine 336) is a Phosphoserine; by CaMK2.

As to quaternary structure, efficient DNA-binding requires dimerization with another bHLH protein. Heterodimer with TCF3/E47; the heterodimer is inhibited in presence of ID2, but not NR0B2, to E-box element. Interacts with EP300; the interaction is inhibited by NR0B2. Interacts with RREB1. Interacts with ATOH8. Phosphorylated by MAPK1; phosphorylation regulates heterodimerization and DNA-binding activities. Phosphorylation on Ser-266 and Ser-274 increases transactivation on the insulin promoter in glucose-stimulated insulinoma cells. Phosphorylated. In islet cells, phosphorylated on Ser-274 upon glucose stimulation; which may be required for nuclear localization. In activated neurons, phosphorylated on Ser-336 by CaMK2; which promotes dendritic growth.

It is found in the cytoplasm. The protein resides in the nucleus. Acts as a transcriptional activator: mediates transcriptional activation by binding to E box-containing promoter consensus core sequences 5'-CANNTG-3'. Associates with the p300/CBP transcription coactivator complex to stimulate transcription of the secretin gene as well as the gene encoding the cyclin-dependent kinase inhibitor CDKN1A. Contributes to the regulation of several cell differentiation pathways, like those that promote the formation of early retinal ganglion cells, inner ear sensory neurons, granule cells forming either the cerebellum or the dentate gyrus cell layer of the hippocampus, endocrine islet cells of the pancreas and enteroendocrine cells of the small intestine. Together with PAX6 or SIX3, is required for the regulation of amacrine cell fate specification. Also required for dendrite morphogenesis and maintenance in the cerebellar cortex. Associates with chromatin to enhancer regulatory elements in genes encoding key transcriptional regulators of neurogenesis. In Rattus norvegicus (Rat), this protein is Neurogenic differentiation factor 1 (Neurod1).